We begin with the raw amino-acid sequence, 236 residues long: 4-hydroxy-tetrahydrodipicolinate reductase (236 aa).

Residues 11-16, 92-94, and 116-119 each bind NAD(+); these read GASGRM, GTT, and GSNF. Histidine 148 functions as the Proton donor/acceptor in the catalytic mechanism. (S)-2,3,4,5-tetrahydrodipicolinate is bound at residue histidine 149. The active-site Proton donor is lysine 152. 158–159 is a (S)-2,3,4,5-tetrahydrodipicolinate binding site; sequence GS.

The protein belongs to the DapB family.

It is found in the cytoplasm. The enzyme catalyses (S)-2,3,4,5-tetrahydrodipicolinate + NAD(+) + H2O = (2S,4S)-4-hydroxy-2,3,4,5-tetrahydrodipicolinate + NADH + H(+). The catalysed reaction is (S)-2,3,4,5-tetrahydrodipicolinate + NADP(+) + H2O = (2S,4S)-4-hydroxy-2,3,4,5-tetrahydrodipicolinate + NADPH + H(+). It participates in amino-acid biosynthesis; L-lysine biosynthesis via DAP pathway; (S)-tetrahydrodipicolinate from L-aspartate: step 4/4. Functionally, catalyzes the conversion of 4-hydroxy-tetrahydrodipicolinate (HTPA) to tetrahydrodipicolinate. In Xylella fastidiosa (strain M23), this protein is 4-hydroxy-tetrahydrodipicolinate reductase.